The following is a 287-amino-acid chain: Elongation factor Ts (287 aa).

An involved in Mg(2+) ion dislocation from EF-Tu region spans residues 80–83 (TDFL).

The protein belongs to the EF-Ts family.

Its subcellular location is the cytoplasm. Associates with the EF-Tu.GDP complex and induces the exchange of GDP to GTP. It remains bound to the aminoacyl-tRNA.EF-Tu.GTP complex up to the GTP hydrolysis stage on the ribosome. In Stutzerimonas stutzeri (strain A1501) (Pseudomonas stutzeri), this protein is Elongation factor Ts.